Consider the following 163-residue polypeptide: RRM-domain-containing protein ECU01_0840 (163 aa).

The 80-residue stretch at 84–163 folds into the RRM domain; the sequence is CSVKLSNLPL…SLGLSAEIAR (80 aa).

This is RRM-domain-containing protein ECU01_0840 from Encephalitozoon cuniculi (strain GB-M1) (Microsporidian parasite).